Here is a 490-residue protein sequence, read N- to C-terminus: Glutathione reductase (490 aa).

FAD is bound by residues Ser19 and Gly20. Ser19 is a binding site for glutathione. Arg26 provides a ligand contact to glutathione. Glu39, Thr48, Cys49, and Lys57 together coordinate FAD. Cys49 and Cys54 are disulfide-bonded. Glutathione is bound at residue Tyr110. Ala126 serves as a coordination point for FAD. Residues Ala208, Ile211, Glu214, Arg231, and Arg237 each coordinate NADP(+). Ser246 is a glutathione binding site. Gly297 contributes to the NADP(+) binding site. Asp337 is an FAD binding site. Residue Glu343 coordinates NADP(+). An FAD-binding site is contributed by Thr345. Arg353 contacts glutathione. Val379 is a binding site for NADP(+). A glutathione-binding site is contributed by Lys432. His479 provides a ligand contact to FAD. His479 acts as the Proton acceptor in catalysis.

It belongs to the class-I pyridine nucleotide-disulfide oxidoreductase family. Homodimer. FAD serves as cofactor.

Its subcellular location is the cytoplasm. It localises to the mitochondrion. The enzyme catalyses 2 glutathione + NADP(+) = glutathione disulfide + NADPH + H(+). Catalyzes the reduction of glutathione disulfide (GSSG) to reduced glutathione (GSH). Constitutes the major mechanism to maintain a high GSH:GSSG ratio in the cytosol. In Debaryomyces hansenii (strain ATCC 36239 / CBS 767 / BCRC 21394 / JCM 1990 / NBRC 0083 / IGC 2968) (Yeast), this protein is Glutathione reductase (GLR1).